A 315-amino-acid polypeptide reads, in one-letter code: Cobalamin biosynthesis protein CobD (315 aa).

A run of 5 helical transmembrane segments spans residues 54-74 (GLLF…ILFL), 78-98 (IAYW…LAMT), 152-172 (ADGV…LALM), 203-223 (IANF…SFIL), and 295-315 (LLYT…LLLF).

This sequence belongs to the CobD/CbiB family.

It localises to the cell membrane. Its pathway is cofactor biosynthesis; adenosylcobalamin biosynthesis. Converts cobyric acid to cobinamide by the addition of aminopropanol on the F carboxylic group. This chain is Cobalamin biosynthesis protein CobD, found in Listeria monocytogenes serotype 4b (strain F2365).